The following is a 122-amino-acid chain: HetP-like commitment protein Alr3234 (122 aa).

Belongs to the HetP family. In terms of assembly, in bacterial two-hybrid assays interacts robustly with itself, Asl1930, Alr2902 and HetR and weakly with HetP.

Its function is as follows. Delays heterocyst differentiation and commitment when nitrogen is limiting. Interplay between the 4 HetP paralogs controls the timing of commitment to heterocyst formation and its duration. Epistatic analysis show that the 3 paralogs act upstream of hetP to delay commitment (asl1930, alr3234) or inhibit development (alr2902). Asl1930 and Alr3234 must also attenuate the activity of Alr2902. Ectopic expression does not complement a hetP deletion. This Nostoc sp. (strain PCC 7120 / SAG 25.82 / UTEX 2576) protein is HetP-like commitment protein Alr3234.